The primary structure comprises 221 residues: Transcription repressor OFP8 (221 aa).

Positions 124-138 (EDEGDKEESEDDDSD) are enriched in acidic residues. The segment at 124–147 (EDEGDKEESEDDDSDTLFSSRSFS) is disordered. The region spanning 158–217 (VVKKSKDPYEDFRTSMVEMIVERQIFAPAELQQLLQCFLSLNSRQHHKVIVQVFLEIYAT) is the OVATE domain.

In terms of tissue distribution, expressed in roots, rosette and cauline leaves, shoots, stems, flower buds and siliques.

The protein localises to the nucleus. Its function is as follows. Transcriptional repressor that regulates multiple aspects of plant growth and development through the regulation of BEL1-LIKE (BLH) and KNOX TALE (KNAT) homeodomain transcription factors. This is Transcription repressor OFP8 (OFP8) from Arabidopsis thaliana (Mouse-ear cress).